We begin with the raw amino-acid sequence, 272 residues long: HMP-PP phosphatase (272 aa).

D8 acts as the Nucleophile in catalysis. Mg(2+)-binding residues include D8, D10, and D212.

Belongs to the HAD-like hydrolase superfamily. Cof family. Requires Mg(2+) as cofactor.

The catalysed reaction is 4-amino-2-methyl-5-(diphosphooxymethyl)pyrimidine + H2O = 4-amino-2-methyl-5-(phosphooxymethyl)pyrimidine + phosphate + H(+). Functionally, catalyzes the hydrolysis of 4-amino-2-methyl-5-hydroxymethylpyrimidine pyrophosphate (HMP-PP) to 4-amino-2-methyl-5-hydroxymethylpyrimidine phosphate (HMP-P). This chain is HMP-PP phosphatase, found in Escherichia coli O8 (strain IAI1).